The chain runs to 1234 residues: DNA-directed RNA polymerase subunit beta (1234 aa).

The disordered stretch occupies residues valine 1189–aspartate 1212. The segment covering asparagine 1195–aspartate 1212 has biased composition (acidic residues).

This sequence belongs to the RNA polymerase beta chain family. In terms of assembly, the RNAP catalytic core consists of 2 alpha, 1 beta, 1 beta' and 1 omega subunit. When a sigma factor is associated with the core the holoenzyme is formed, which can initiate transcription.

The catalysed reaction is RNA(n) + a ribonucleoside 5'-triphosphate = RNA(n+1) + diphosphate. DNA-dependent RNA polymerase catalyzes the transcription of DNA into RNA using the four ribonucleoside triphosphates as substrates. The chain is DNA-directed RNA polymerase subunit beta from Clostridium kluyveri (strain NBRC 12016).